A 270-amino-acid chain; its full sequence is Beta carbonic anhydrase 1 (270 aa).

Zn(2+) contacts are provided by cysteine 39, aspartate 41, histidine 105, and cysteine 108.

Belongs to the beta-class carbonic anhydrase family. Oligomer. It depends on Zn(2+) as a cofactor.

The enzyme catalyses hydrogencarbonate + H(+) = CO2 + H2O. In terms of biological role, reversible hydration of carbon dioxide. This chain is Beta carbonic anhydrase 1 (bca-1), found in Caenorhabditis elegans.